Here is a 94-residue protein sequence, read N- to C-terminus: Pyrimidine/purine nucleoside phosphorylase (94 aa).

It belongs to the nucleoside phosphorylase PpnP family.

It catalyses the reaction a purine D-ribonucleoside + phosphate = a purine nucleobase + alpha-D-ribose 1-phosphate. The catalysed reaction is adenosine + phosphate = alpha-D-ribose 1-phosphate + adenine. It carries out the reaction cytidine + phosphate = cytosine + alpha-D-ribose 1-phosphate. The enzyme catalyses guanosine + phosphate = alpha-D-ribose 1-phosphate + guanine. It catalyses the reaction inosine + phosphate = alpha-D-ribose 1-phosphate + hypoxanthine. The catalysed reaction is thymidine + phosphate = 2-deoxy-alpha-D-ribose 1-phosphate + thymine. It carries out the reaction uridine + phosphate = alpha-D-ribose 1-phosphate + uracil. The enzyme catalyses xanthosine + phosphate = alpha-D-ribose 1-phosphate + xanthine. In terms of biological role, catalyzes the phosphorolysis of diverse nucleosides, yielding D-ribose 1-phosphate and the respective free bases. Can use uridine, adenosine, guanosine, cytidine, thymidine, inosine and xanthosine as substrates. Also catalyzes the reverse reactions. This Escherichia fergusonii (strain ATCC 35469 / DSM 13698 / CCUG 18766 / IAM 14443 / JCM 21226 / LMG 7866 / NBRC 102419 / NCTC 12128 / CDC 0568-73) protein is Pyrimidine/purine nucleoside phosphorylase.